The primary structure comprises 316 residues: Ribose-phosphate pyrophosphokinase (316 aa).

ATP is bound by residues 41 to 43 (DGE) and 100 to 101 (RQ). Histidine 134 and aspartate 175 together coordinate Mg(2+). Lysine 198 is an active-site residue. D-ribose 5-phosphate-binding positions include arginine 200, aspartate 224, and 228-232 (DTARS).

This sequence belongs to the ribose-phosphate pyrophosphokinase family. Class I subfamily. Homohexamer. Requires Mg(2+) as cofactor.

The protein resides in the cytoplasm. The catalysed reaction is D-ribose 5-phosphate + ATP = 5-phospho-alpha-D-ribose 1-diphosphate + AMP + H(+). It participates in metabolic intermediate biosynthesis; 5-phospho-alpha-D-ribose 1-diphosphate biosynthesis; 5-phospho-alpha-D-ribose 1-diphosphate from D-ribose 5-phosphate (route I): step 1/1. Involved in the biosynthesis of the central metabolite phospho-alpha-D-ribosyl-1-pyrophosphate (PRPP) via the transfer of pyrophosphoryl group from ATP to 1-hydroxyl of ribose-5-phosphate (Rib-5-P). The chain is Ribose-phosphate pyrophosphokinase from Thermosipho africanus (strain TCF52B).